The primary structure comprises 392 residues: Chaperone protein DnaJ (392 aa).

Residues 2–67 (DYYSILGISK…QKRDSYDRFG (66 aa)) enclose the J domain. The CR-type zinc finger occupies 148–226 (GVEKELVVSG…CRGQGRVKDK (79 aa)). The Zn(2+) site is built by Cys161, Cys164, Cys178, Cys181, Cys200, Cys203, Cys214, and Cys217. CXXCXGXG motif repeat units follow at residues 161–168 (CETCSGQG), 178–185 (CERCKGSG), 200–207 (CPECGGEG), and 214–221 (CSSCRGQG).

The protein belongs to the DnaJ family. As to quaternary structure, homodimer. Zn(2+) is required as a cofactor.

The protein localises to the cytoplasm. Participates actively in the response to hyperosmotic and heat shock by preventing the aggregation of stress-denatured proteins and by disaggregating proteins, also in an autonomous, DnaK-independent fashion. Unfolded proteins bind initially to DnaJ; upon interaction with the DnaJ-bound protein, DnaK hydrolyzes its bound ATP, resulting in the formation of a stable complex. GrpE releases ADP from DnaK; ATP binding to DnaK triggers the release of the substrate protein, thus completing the reaction cycle. Several rounds of ATP-dependent interactions between DnaJ, DnaK and GrpE are required for fully efficient folding. Also involved, together with DnaK and GrpE, in the DNA replication of plasmids through activation of initiation proteins. The chain is Chaperone protein DnaJ from Chlamydia pneumoniae (Chlamydophila pneumoniae).